Consider the following 570-residue polypeptide: NADPH oxidase 2 (570 aa).

Over 2-9 (GNWVVNEG) the chain is Cytoplasmic. Residues 10–36 (ISIFVILVWLGMNVFLFVWYYRVYDIP) form a helical membrane-spanning segment. Topologically, residues 37–46 (DKFFYTRKLL) are extracellular. A helical membrane pass occupies residues 47 to 72 (GSALALARAPAACLNFNCMLILLPVC). Residues 54–286 (RAPAACLNFN…MFLYLCERLV (233 aa)) form the Ferric oxidoreductase domain. Topologically, residues 73–95 (RNLLSFLRGSSACCSTRIRRQLD) are cytoplasmic. A helical membrane pass occupies residues 96–130 (RNLTFHKMVAWMIALHTAIHTIAHLFNVEWCVNAR). Positions 101 and 115 each coordinate heme b. Over 131 to 163 (VNNSDPYSIALSDIGDKPNETYLNFVRQRIKNP) the chain is Extracellular. Residues Asn132 and Asn149 are each glycosylated (N-linked (GlcNAc...) asparagine). Lys161 participates in a covalent cross-link: Glycyl lysine isopeptide (Lys-Gly) (interchain with G-Cter in ubiquitin). Residues 164–194 (EGGLYVAVTRLAGITGVVITLCLILIITSST) traverse the membrane as a helical segment. Over 195 to 203 (KTIRRSYFE) the chain is Cytoplasmic. FAD-binding residues include Arg199 and Ser200. Residues 204–222 (VFWYTHHLFVIFFIGLAIH) form a helical membrane-spanning segment. Heme b is bound by residues Trp206, His209, His222, Arg226, and Ile227. Residues 223–267 (GAQRIVRGQTAESLLKHQPRNCYQNISQWGKIENCPIPEFSGNPP) lie on the Extracellular side of the membrane. A glycan (N-linked (GlcNAc...) asparagine) is linked at Asn247. The heme b site is built by Met268, Tyr280, and Arg287. A helical transmembrane segment spans residues 268–285 (MTWKWIVGPMFLYLCERL). The Cytoplasmic segment spans residues 286 to 570 (VRFWRSQQKV…VHFIFNKENF (285 aa)). In terms of domain architecture, FAD-binding FR-type spans 287-397 (RFWRSQQKVV…DGPFGTASED (111 aa)). Glycyl lysine isopeptide (Lys-Gly) (interchain with G-Cter in ubiquitin) cross-links involve residues Lys294, Lys299, Lys306, Lys328, and Lys334. FAD contacts are provided by Trp337, His338, Pro339, Thr341, His354, Arg356, Trp361, and Thr362. Lys381 is covalently cross-linked (Glycyl lysine isopeptide (Lys-Gly) (interchain with G-Cter in ubiquitin)). NADPH is bound by residues Ile411, Arg446, and Thr481. Lys506 is covalently cross-linked (Glycyl lysine isopeptide (Lys-Gly) (interchain with G-Cter in ubiquitin)). An NADPH-binding site is contributed by Arg513. Lys567 participates in a covalent cross-link: Glycyl lysine isopeptide (Lys-Gly) (interchain with G-Cter in ubiquitin).

As to quaternary structure, component of the phagocyte NADPH oxidase core complex/cytochrome b558 complex, composed of CYBB (heavy chain (beta)) and CYBA (light chain (alpha)). Component of the phagocyte NADPH oxidase complex composed of an obligatory core heterodimer formed by the membrane proteins CYBA and CYBB and the cytosolic regulatory subunits NCF1/p47-phox, NCF2/p67-phox, NCF4/p40-phox and the small GTPase RAC1 or RAC2. Interacts with NCF1 (phosphorylated form). Interacts with NCF2; the interaction is enhanced in the presence of GBP7. Interacts with RAC2. Interacts with RAC1. Interacts with calprotectin (S100A8/9). Interacts with NRROS; the interaction is direct and impairs formation of a stable NADPH oxidase complex. Interacts with CYBC1; CYBC1 may act as a chaperone stabilizing Cytochrome b-245 heterodimer. The CYBA-CYBB complex interacts with GBP7. The cofactor is FAD. In terms of processing, glycosylated. Phosphorylated on Ser and Thr residues by PKC during neutrophils activation. Phosphorylation enhances the NADPH oxidase activity and stimulates its interaction with RAC2, NCF2/p67-phox, and NCF1/p47-phox. Post-translationally, undergoes 'Lys-48'-linked polyubiquitination, likely by RNF145, triggering endoplasmic reticulum-associated degradation.

It is found in the cell membrane. The catalysed reaction is NADPH + 2 O2 = 2 superoxide + NADP(+) + H(+). Catalytic subunit of the phagocyte NADPH oxidase complex that mediates the transfer of electrons from cytosolic NADPH to O2 to produce the superoxide anion (O2(-)). In the activated complex, electrons are first transferred from NADPH to flavin adenine dinucleotide (FAD) and subsequently transferred via two heme molecules to molecular oxygen, producing superoxide through an outer-sphere reaction. Activation of the NADPH oxidase complex is initiated by the assembly of cytosolic subunits of the NADPH oxidase complex with the core NADPH oxidase complex to form a complex at the plasma membrane or phagosomal membrane. This activation process is initiated by phosphorylation dependent binding of the cytosolic NCF1/p47-phox subunit to the C-terminus of CYBA/p22-phox. NADPH oxidase complex assembly is impaired through interaction with NRROS. The chain is NADPH oxidase 2 from Bos taurus (Bovine).